Reading from the N-terminus, the 144-residue chain is Phospholipase A2 (144 aa).

The N-terminal stretch at methionine 1–alanine 15 is a signal peptide. A propeptide spans alanine 16–threonine 22 (activation peptide). 7 disulfides stabilise this stretch: cysteine 33/cysteine 99, cysteine 49/cysteine 144, cysteine 51/cysteine 67, cysteine 66/cysteine 127, cysteine 73/cysteine 120, cysteine 83/cysteine 113, and cysteine 106/cysteine 118. Positions 50, 52, and 54 each coordinate Ca(2+). Residue histidine 70 is part of the active site. Aspartate 71 is a binding site for Ca(2+). Residue aspartate 121 is part of the active site.

It belongs to the phospholipase A2 family. As to quaternary structure, monomer or homodimer. It depends on Ca(2+) as a cofactor. In terms of processing, activated by trypsin cleavage in the duodenum. Can also be activated by thrombin or autocatalytically.

It is found in the secreted. The catalysed reaction is a 1,2-diacyl-sn-glycero-3-phosphocholine + H2O = a 1-acyl-sn-glycero-3-phosphocholine + a fatty acid + H(+). It catalyses the reaction 1,2-ditetradecanoyl-sn-glycero-3-phosphocholine + H2O = 1-tetradecanoyl-sn-glycero-3-phosphocholine + tetradecanoate + H(+). The enzyme catalyses 1,2-dihexadecanoyl-sn-glycero-3-phosphocholine + H2O = 1-hexadecanoyl-sn-glycero-3-phosphocholine + hexadecanoate + H(+). It carries out the reaction 1-hexadecanoyl-2-(9Z-octadecenoyl)-sn-glycero-3-phosphocholine + H2O = 1-hexadecanoyl-sn-glycero-3-phosphocholine + (9Z)-octadecenoate + H(+). The catalysed reaction is 1-hexadecanoyl-2-(5Z,8Z,11Z,14Z-eicosatetraenoyl)-sn-glycero-3-phosphocholine + H2O = 1-hexadecanoyl-sn-glycero-3-phosphocholine + (5Z,8Z,11Z,14Z)-eicosatetraenoate + H(+). It catalyses the reaction 1-hexadecanoyl-2-(9Z-octadecenoyl)-sn-glycero-3-phospho-(1'-sn-glycerol) + H2O = 1-hexadecanoyl-sn-glycero-3-phospho-(1'-sn-glycerol) + (9Z)-octadecenoate + H(+). The enzyme catalyses N-hexadecanoyl-1,2-di-(9Z-octadecenoyl)-sn-glycero-3-phosphoethanolamine + H2O = N-hexadecanoyl-1-(9Z-octadecenoyl)-sn-glycero-3-phosphoethanolamine + (9Z)-octadecenoate + H(+). It carries out the reaction 1-hexadecanoyl-2-(9Z,12Z-octadecadienoyl)-sn-glycero-3-phosphoethanolamine + H2O = 1-hexadecanoyl-sn-glycero-3-phosphoethanolamine + (9Z,12Z)-octadecadienoate + H(+). The catalysed reaction is N,1-dihexadecanoyl-2-(9Z,12Z-octadecadienoyl)-sn-glycero-3-phosphoethanolamine + H2O = N,1-dihexadecanoyl-sn-glycero-3-phosphoethanolamine + (9Z,12Z)-octadecadienoate + H(+). In terms of biological role, secretory calcium-dependent phospholipase A2 that primarily targets dietary phospholipids in the intestinal tract. Hydrolyzes the ester bond of the fatty acyl group attached at sn-2 position of phospholipids (phospholipase A2 activity) with preference for phosphatidylethanolamines and phosphatidylglycerols over phosphatidylcholines. May play a role in the biosynthesis of N-acyl ethanolamines that regulate energy metabolism and inflammation in the intestinal tract. Hydrolyzes N-acyl phosphatidylethanolamines to N-acyl lysophosphatidylethanolamines, which are further cleaved by a lysophospholipase D to release N-acyl ethanolamines. May act in an autocrine and paracrine manner. Has anti-helminth activity in a process regulated by gut microbiota. Upon helminth infection of intestinal epithelia, directly affects phosphatidylethanolamine contents in the membrane of helminth larvae, likely controlling an array of phospholipid-mediated cellular processes such as membrane fusion and cell division while providing for better immune recognition, ultimately reducing larvae integrity and infectivity. This is Phospholipase A2 (PLA2G1B) from Oryctolagus cuniculus (Rabbit).